Here is a 130-residue protein sequence, read N- to C-terminus: Sulfurtransferase TusD (130 aa).

C80 serves as the catalytic Cysteine persulfide intermediate.

It belongs to the DsrE/TusD family. Heterohexamer, formed by a dimer of trimers. The hexameric TusBCD complex contains 2 copies each of TusB, TusC and TusD. The TusBCD complex interacts with TusE.

The protein resides in the cytoplasm. Functionally, part of a sulfur-relay system required for 2-thiolation of 5-methylaminomethyl-2-thiouridine (mnm(5)s(2)U) at tRNA wobble positions. Accepts sulfur from TusA and transfers it in turn to TusE. The chain is Sulfurtransferase TusD from Sodalis glossinidius (strain morsitans).